The primary structure comprises 305 residues: UDP-3-O-acyl-N-acetylglucosamine deacetylase (305 aa).

Zn(2+) contacts are provided by His-78, His-237, and Asp-241. Residue His-264 is the Proton donor of the active site.

The protein belongs to the LpxC family. It depends on Zn(2+) as a cofactor.

It catalyses the reaction a UDP-3-O-[(3R)-3-hydroxyacyl]-N-acetyl-alpha-D-glucosamine + H2O = a UDP-3-O-[(3R)-3-hydroxyacyl]-alpha-D-glucosamine + acetate. It participates in glycolipid biosynthesis; lipid IV(A) biosynthesis; lipid IV(A) from (3R)-3-hydroxytetradecanoyl-[acyl-carrier-protein] and UDP-N-acetyl-alpha-D-glucosamine: step 2/6. Functionally, catalyzes the hydrolysis of UDP-3-O-myristoyl-N-acetylglucosamine to form UDP-3-O-myristoylglucosamine and acetate, the committed step in lipid A biosynthesis. This chain is UDP-3-O-acyl-N-acetylglucosamine deacetylase, found in Paraburkholderia phytofirmans (strain DSM 17436 / LMG 22146 / PsJN) (Burkholderia phytofirmans).